The following is a 211-amino-acid chain: ATP-dependent Clp protease proteolytic subunit (211 aa).

Serine 106 acts as the Nucleophile in catalysis. Histidine 131 is an active-site residue.

The protein belongs to the peptidase S14 family. As to quaternary structure, fourteen ClpP subunits assemble into 2 heptameric rings which stack back to back to give a disk-like structure with a central cavity, resembling the structure of eukaryotic proteasomes.

It is found in the cytoplasm. The catalysed reaction is Hydrolysis of proteins to small peptides in the presence of ATP and magnesium. alpha-casein is the usual test substrate. In the absence of ATP, only oligopeptides shorter than five residues are hydrolyzed (such as succinyl-Leu-Tyr-|-NHMec, and Leu-Tyr-Leu-|-Tyr-Trp, in which cleavage of the -Tyr-|-Leu- and -Tyr-|-Trp bonds also occurs).. Cleaves peptides in various proteins in a process that requires ATP hydrolysis. Has a chymotrypsin-like activity. Plays a major role in the degradation of misfolded proteins. The polypeptide is ATP-dependent Clp protease proteolytic subunit (Nitrobacter hamburgensis (strain DSM 10229 / NCIMB 13809 / X14)).